The following is a 501-amino-acid chain: Ribose import ATP-binding protein RbsA (501 aa).

2 ABC transporter domains span residues 5 to 241 and 252 to 495; these read LQLK…VGRK and APGD…VGKL. 37–44 contributes to the ATP binding site; the sequence is GENGAGKS.

Belongs to the ABC transporter superfamily. Ribose importer (TC 3.A.1.2.1) family. As to quaternary structure, the complex is composed of an ATP-binding protein (RbsA), two transmembrane proteins (RbsC) and a solute-binding protein (RbsB).

Its subcellular location is the cell inner membrane. It carries out the reaction D-ribose(out) + ATP + H2O = D-ribose(in) + ADP + phosphate + H(+). Functionally, part of the ABC transporter complex RbsABC involved in ribose import. Responsible for energy coupling to the transport system. The polypeptide is Ribose import ATP-binding protein RbsA (Escherichia coli (strain UTI89 / UPEC)).